The chain runs to 820 residues: Trimethylamine-N-oxide reductase (820 aa).

A signal peptide (tat-type signal) is located at residues 1–33; sequence MAITRRSFLKGVATTSAASVIGPSLLASASANA. Position 179 (Ser-179) interacts with Mo-bis(molybdopterin guanine dinucleotide).

The protein belongs to the prokaryotic molybdopterin-containing oxidoreductase family. Mo-bis(molybdopterin guanine dinucleotide) is required as a cofactor. Post-translationally, predicted to be exported by the Tat system. The position of the signal peptide cleavage has not been experimentally proven.

It localises to the periplasm. It catalyses the reaction trimethylamine + 2 Fe(III)-[cytochrome c] + H2O = trimethylamine N-oxide + 2 Fe(II)-[cytochrome c] + 3 H(+). Reduces trimethylamine-N-oxide (TMAO) into trimethylamine; an anaerobic reaction coupled to energy-yielding reactions. The chain is Trimethylamine-N-oxide reductase (torA) from Vibrio vulnificus (strain CMCP6).